A 468-amino-acid polypeptide reads, in one-letter code: Putative BTB/POZ domain and WD-repeat protein R154 (468 aa).

Positions 14–85 (SDLQLIVEDS…FYGIDDKLPE (72 aa)) constitute a BTB domain. 3 WD repeats span residues 194–233 (HHSENITSLCYDNNNKRIIYGDLKGTIYAYDFFSNKIIFN), 354–398 (DEIG…LVKS), and 401–440 (LFDVPIISMTYSPNGDQLIVANCDREVRILNSDNYEIIYT).

Belongs to the mimivirus BTB/WD family.

In Acanthamoeba polyphaga (Amoeba), this protein is Putative BTB/POZ domain and WD-repeat protein R154.